The chain runs to 369 residues: Methylthioribose-1-phosphate isomerase (369 aa).

Met-1 carries the N-acetylmethionine modification. Arg-158 carries the omega-N-methylarginine modification. The active-site Proton donor is Asp-248. Ser-366 carries the post-translational modification Phosphoserine.

This sequence belongs to the eIF-2B alpha/beta/delta subunits family. MtnA subfamily.

It localises to the cytoplasm. Its subcellular location is the nucleus. It carries out the reaction 5-(methylsulfanyl)-alpha-D-ribose 1-phosphate = 5-(methylsulfanyl)-D-ribulose 1-phosphate. It functions in the pathway amino-acid biosynthesis; L-methionine biosynthesis via salvage pathway; L-methionine from S-methyl-5-thio-alpha-D-ribose 1-phosphate: step 1/6. Functionally, catalyzes the interconversion of methylthioribose-1-phosphate (MTR-1-P) into methylthioribulose-1-phosphate (MTRu-1-P). In Rattus norvegicus (Rat), this protein is Methylthioribose-1-phosphate isomerase (Mri1).